Reading from the N-terminus, the 341-residue chain is HTH-type transcriptional repressor PurR (341 aa).

Positions 2-56 constitute an HTH lacI-type domain; it reads ATIKDVAKRANVSTTTVSHVINKTRFVAEETRNAVWAAIKELHYSPSAVARSLKV. A DNA-binding region (H-T-H motif) is located at residues 4–23; the sequence is IKDVAKRANVSTTTVSHVIN. The DNA-binding element occupies 48-56; sequence SAVARSLKV. Hypoxanthine is bound by residues Y73, R190, T192, F221, and D275.

As to quaternary structure, homodimer.

It functions in the pathway purine metabolism; purine nucleotide biosynthesis [regulation]. In terms of biological role, is the main repressor of the genes involved in the de novo synthesis of purine nucleotides, regulating purB, purC, purEK, purF, purHD, purL, purMN and guaBA expression. PurR is allosterically activated to bind its cognate DNA by binding the purine corepressors, hypoxanthine or guanine, thereby effecting transcription repression. The sequence is that of HTH-type transcriptional repressor PurR from Salmonella typhi.